Consider the following 288-residue polypeptide: NAD(P)H-hydrate epimerase (288 aa).

The transit peptide at 1–48 directs the protein to the mitochondrion; it reads MSALRALLGLGLLAAGSRLRRVPGRAGACPAGSAWWEARRPHSGGGGE. Positions 65-275 constitute a YjeF N-terminal domain; that stretch reads AQAVDEELFN…ALEKKYQLNL (211 aa). 119–123 contributes to the (6S)-NADPHX binding site; that stretch reads NNGGD. Asn-120 contributes to the K(+) binding site. Lys-144 is modified (N6-succinyllysine). Asp-185 provides a ligand contact to K(+). (6S)-NADPHX is bound by residues 189-195 and Asp-218; that span reads GFSFKGD. Ser-221 contacts K(+).

It belongs to the NnrE/AIBP family. As to quaternary structure, homodimer. Interacts with APOA1 and APOA2. K(+) is required as a cofactor. In terms of processing, undergoes physiological phosphorylation during sperm capacitation, downstream to PKA activation.

Its subcellular location is the mitochondrion. It is found in the secreted. It catalyses the reaction (6R)-NADHX = (6S)-NADHX. It carries out the reaction (6R)-NADPHX = (6S)-NADPHX. In terms of biological role, catalyzes the epimerization of the S- and R-forms of NAD(P)HX, a damaged form of NAD(P)H that is a result of enzymatic or heat-dependent hydration. This is a prerequisite for the S-specific NAD(P)H-hydrate dehydratase to allow the repair of both epimers of NAD(P)HX. Accelerates cholesterol efflux from endothelial cells to high-density lipoprotein (HDL) and thereby regulates angiogenesis. This chain is NAD(P)H-hydrate epimerase, found in Canis lupus familiaris (Dog).